The chain runs to 377 residues: Chaperone protein DnaJ (377 aa).

The J domain maps to 5–70 (DYYEILGVSK…QKRAAYDQYG (66 aa)). The CR-type zinc finger occupies 132–210 (GVTKEIRIPT…CHGHGRVEKT (79 aa)). Zn(2+)-binding residues include Cys-145, Cys-148, Cys-162, Cys-165, Cys-184, Cys-187, Cys-198, and Cys-201. CXXCXGXG motif repeat units lie at residues 145 to 152 (CDVCHGSG), 162 to 169 (CPTCHGAG), 184 to 191 (CPHCQGRG), and 198 to 205 (CNKCHGHG).

It belongs to the DnaJ family. As to quaternary structure, homodimer. Requires Zn(2+) as cofactor.

It localises to the cytoplasm. Participates actively in the response to hyperosmotic and heat shock by preventing the aggregation of stress-denatured proteins and by disaggregating proteins, also in an autonomous, DnaK-independent fashion. Unfolded proteins bind initially to DnaJ; upon interaction with the DnaJ-bound protein, DnaK hydrolyzes its bound ATP, resulting in the formation of a stable complex. GrpE releases ADP from DnaK; ATP binding to DnaK triggers the release of the substrate protein, thus completing the reaction cycle. Several rounds of ATP-dependent interactions between DnaJ, DnaK and GrpE are required for fully efficient folding. Also involved, together with DnaK and GrpE, in the DNA replication of plasmids through activation of initiation proteins. The sequence is that of Chaperone protein DnaJ from Klebsiella pneumoniae subsp. pneumoniae (strain ATCC 700721 / MGH 78578).